The primary structure comprises 880 residues: MOG interacting and ectopic P-granules protein 1 (880 aa).

Over residues Met-1–Thr-20 the composition is skewed to polar residues. Disordered regions lie at residues Met-1 to Asp-37, Asp-82 to Glu-257, and Glu-350 to Pro-370. A compositionally biased stretch (basic and acidic residues) spans Met-23–Asp-37. Polar residues predominate over residues Ala-87–Val-105. Over residues Glu-108 to Asn-120 the composition is skewed to acidic residues. 2 stretches are compositionally biased toward basic and acidic residues: residues Ser-154–Ser-170 and Lys-183–Thr-193. Over residues Gln-215–Gln-224 the composition is skewed to acidic residues. Composition is skewed to basic and acidic residues over residues Gln-235–Pro-252 and Glu-350–Gln-364. 2 C2H2-type zinc fingers span residues Ser-436 to His-459 and Phe-465 to His-488. Residues Tyr-501 to Cys-523 form a CCHC-type zinc finger. C2H2-type zinc fingers lie at residues Phe-728–His-751, Leu-768–His-791, Gly-809–His-830, and Tyr-841–His-864.

Interacts with hda-1, let-418, lin-1, mog-1, mog-4, mog-5, mog-6, pie-1 and unc-98.

The protein resides in the nucleus. Has a broad role in development, specifically in the genetic pathway SynMuvB that negatively regulates specification of the vulval cell fate. Required for fem-3 3'-UTR-mediated repression in the regulation of the sperm/oocyte switch. Acts by regulating the translation of fem-3 mRNA, by binding to its 3'-UTR. The chain is MOG interacting and ectopic P-granules protein 1 from Caenorhabditis briggsae.